Reading from the N-terminus, the 353-residue chain is Phospho-N-acetylmuramoyl-pentapeptide-transferase (353 aa).

Transmembrane regions (helical) follow at residues 24–44 (LGFF…ILWA), 66–86 (TPTM…VLCA), 88–108 (LGNL…FVGF), 129–149 (FGML…KGLD), 160–180 (PLFE…FLST), 192–212 (GLAS…VYVA), 229–249 (VGEL…FLWY), 256–276 (VFMG…NAIV), 281–301 (ILLV…ILQV), and 330–350 (KVIV…LLSL).

Belongs to the glycosyltransferase 4 family. MraY subfamily. Mg(2+) serves as cofactor.

Its subcellular location is the cell inner membrane. It carries out the reaction UDP-N-acetyl-alpha-D-muramoyl-L-alanyl-gamma-D-glutamyl-meso-2,6-diaminopimeloyl-D-alanyl-D-alanine + di-trans,octa-cis-undecaprenyl phosphate = di-trans,octa-cis-undecaprenyl diphospho-N-acetyl-alpha-D-muramoyl-L-alanyl-D-glutamyl-meso-2,6-diaminopimeloyl-D-alanyl-D-alanine + UMP. The protein operates within cell wall biogenesis; peptidoglycan biosynthesis. In terms of biological role, catalyzes the initial step of the lipid cycle reactions in the biosynthesis of the cell wall peptidoglycan: transfers peptidoglycan precursor phospho-MurNAc-pentapeptide from UDP-MurNAc-pentapeptide onto the lipid carrier undecaprenyl phosphate, yielding undecaprenyl-pyrophosphoryl-MurNAc-pentapeptide, known as lipid I. This Helicobacter pylori (strain ATCC 700392 / 26695) (Campylobacter pylori) protein is Phospho-N-acetylmuramoyl-pentapeptide-transferase.